Reading from the N-terminus, the 448-residue chain is Probable D-serine dehydratase (448 aa).

K119 carries the N6-(pyridoxal phosphate)lysine modification.

It belongs to the serine/threonine dehydratase family. DsdA subfamily. Requires pyridoxal 5'-phosphate as cofactor.

It carries out the reaction D-serine = pyruvate + NH4(+). The protein is Probable D-serine dehydratase of Pseudomonas aeruginosa (strain ATCC 15692 / DSM 22644 / CIP 104116 / JCM 14847 / LMG 12228 / 1C / PRS 101 / PAO1).